The following is a 768-amino-acid chain: MSASRAAELRKRLNHYAHSYHTLDTSLVSDAEYDRLFRELQSLEAADPTLISADSPTHRVGGAILEGFEKVRHRVAMLSLDNAFSAQDLVEFHRRVQEGLAESVVVEAVQHYQDEYGLSDLGALVGRPGALEGVARDVTQRLNQTLSFVEPLQPPDTKSLLSSGRKAADILRRLRLWAAEQPQRVEYVAEPKLDGLAFSLTYAEGVLVRAATRGDGQEGEDVTAHARTIQDVPLRLQGAGYPALLEVRGEVYMPLATFEKLNAEARERGEKTFANPRNAAAGSLRQLDPKITASRGLRMFCYGTGYVEGGTLADRYAEILAALKGWGLRVSPEAERVEGAQGCLAYTERLGEKRETLPYEIDGAVLKVDSQRLRERLGFVARAPRWAMAFKFPATEESTTVQAIDLQVGRTGVITPVARLEPVAVGGVTVTNATLHNFLELARKDVRVGDRVIVRRAGDVIPEVVRVIPRESHGALAVYKEPVACPVCGAPTEREGGETALRCSGGLTCRAQVKEGVKHFASRKAMNIEGLGDKLVALLMQAGLVERISDLYRLHEQRQVLVGLERLGGKSVANLLEAIEQSKAQSAARFLFGLGIRDVGVTLAGSLAAHFTSLDALMAATVEDLVGIEDVGEVVARRVVHFFAQAHHGAELAALRALGVAAAGEPWRVEPDGHGVAAAEQPLSGLSVVLTGTLAGLTREAAAVRLEGLGAKVVASVSGKTGCLVCGESAGSKLAKAQKAGVPVLDEAALEGLFRGEIPPEIQARMQG.

NAD(+) is bound by residues 30–34, 79–80, and glutamate 190; these read DAEYD and SL. The active-site N6-AMP-lysine intermediate is the lysine 192. Residues arginine 213, glutamate 250, lysine 367, and lysine 391 each contribute to the NAD(+) site. Zn(2+) contacts are provided by cysteine 485, cysteine 488, cysteine 503, and cysteine 509. The BRCT domain maps to 678–767; sequence AAEQPLSGLS…IPPEIQARMQ (90 aa).

The protein belongs to the NAD-dependent DNA ligase family. LigA subfamily. Mg(2+) serves as cofactor. The cofactor is Mn(2+).

The catalysed reaction is NAD(+) + (deoxyribonucleotide)n-3'-hydroxyl + 5'-phospho-(deoxyribonucleotide)m = (deoxyribonucleotide)n+m + AMP + beta-nicotinamide D-nucleotide.. DNA ligase that catalyzes the formation of phosphodiester linkages between 5'-phosphoryl and 3'-hydroxyl groups in double-stranded DNA using NAD as a coenzyme and as the energy source for the reaction. It is essential for DNA replication and repair of damaged DNA. This Magnetococcus marinus (strain ATCC BAA-1437 / JCM 17883 / MC-1) protein is DNA ligase.